Here is a 500-residue protein sequence, read N- to C-terminus: Na(+)/H(+) antiporter NhaB (500 aa).

Helical transmembrane passes span 23–43 (VVIC…GPVA), 53–73 (IFTL…LLLI), 96–116 (VILL…LLLF), 129–149 (AILA…LDAL), 150–170 (TVTA…HRVA), 205–225 (LLMH…VGEP), 238–258 (FVDF…AGLV), 311–331 (ILII…LMVI), 350–370 (FQDA…VAVI), 450–470 (ATPN…APLI), and 477–497 (MVWM…WAVT).

Belongs to the NhaB Na(+)/H(+) (TC 2.A.34) antiporter family.

Its subcellular location is the cell inner membrane. The enzyme catalyses 2 Na(+)(in) + 3 H(+)(out) = 2 Na(+)(out) + 3 H(+)(in). Its function is as follows. Na(+)/H(+) antiporter that extrudes sodium in exchange for external protons. The polypeptide is Na(+)/H(+) antiporter NhaB (Pseudomonas putida (strain ATCC 47054 / DSM 6125 / CFBP 8728 / NCIMB 11950 / KT2440)).